The primary structure comprises 201 residues: Probable nicotinate-nucleotide adenylyltransferase (201 aa).

The protein belongs to the NadD family.

It carries out the reaction nicotinate beta-D-ribonucleotide + ATP + H(+) = deamido-NAD(+) + diphosphate. The protein operates within cofactor biosynthesis; NAD(+) biosynthesis; deamido-NAD(+) from nicotinate D-ribonucleotide: step 1/1. Catalyzes the reversible adenylation of nicotinate mononucleotide (NaMN) to nicotinic acid adenine dinucleotide (NaAD). The polypeptide is Probable nicotinate-nucleotide adenylyltransferase (Bacteroides fragilis (strain YCH46)).